The sequence spans 954 residues: Patched domain-containing protein 3 (954 aa).

Residues 1–20 (MPWVEPKPRPGPEQKPKLTK) show a composition bias toward basic and acidic residues. Residues 1–103 (MPWVEPKPRP…APLPEEETPE (103 aa)) form a disordered region. Residues 42–57 (QPPPGPLAPPKSPEPS) show a composition bias toward pro residues. Residues 90–102 (ELDDAPLPEEETP) are compositionally biased toward acidic residues. The helical transmembrane segment at 139 to 159 (WIFLLAPLMLTAALGTGFLYL) threads the bilayer. N-linked (GlcNAc...) asparagine glycans are attached at residues asparagine 192, asparagine 275, and asparagine 279. The next 7 membrane-spanning stretches (helical) occupy residues 297–317 (LTGF…QLLL), 383–403 (VIPV…TSCF), 423–443 (FLAV…FVII), 447–467 (SPFL…SAWH), 486–506 (AAVS…TGIM), 520–540 (GMTL…FMAL), and 603–623 (YFVV…CFHV). In terms of domain architecture, SSD spans 383 to 540 (VIPVFHLAYI…ITCFGAFMAL (158 aa)). 3 N-linked (GlcNAc...) asparagine glycosylation sites follow: asparagine 678, asparagine 692, and asparagine 737. The next 5 helical transmembrane spans lie at 804 to 824 (VLVA…YPLC), 826 to 846 (LWVT…MAFW), 858 to 878 (LVIC…AFVS), 894 to 914 (LLGY…CVLA), and 927 to 947 (IMFL…PVFL).

The protein belongs to the patched family. As to expression, expressed in germ cells of the testis (at protein level). Detected in blood lymph, colon, small intestine, ovary, testis, prostate, thymus and spleen with highest levels in testis.

It is found in the cell projection. The protein resides in the cilium. It localises to the flagellum membrane. The protein localises to the endoplasmic reticulum membrane. Functionally, may play a role in sperm development or sperm function. However, does not appear to have an essential role in spermatogenesis or male fertility. This Homo sapiens (Human) protein is Patched domain-containing protein 3 (PTCHD3).